The primary structure comprises 241 residues: Geranylgeranylglyceryl phosphate synthase (241 aa).

Asp26 and Ser52 together coordinate Mg(2+). Sn-glycerol 1-phosphate contacts are provided by residues 172-178 (YFEAGSG), 204-205 (GG), and 226-227 (GT).

It belongs to the GGGP/HepGP synthase family. Group II subfamily. Mg(2+) serves as cofactor.

The protein localises to the cytoplasm. The catalysed reaction is sn-glycerol 1-phosphate + (2E,6E,10E)-geranylgeranyl diphosphate = sn-3-O-(geranylgeranyl)glycerol 1-phosphate + diphosphate. Its pathway is membrane lipid metabolism; glycerophospholipid metabolism. Prenyltransferase that catalyzes the transfer of the geranylgeranyl moiety of geranylgeranyl diphosphate (GGPP) to the C3 hydroxyl of sn-glycerol-1-phosphate (G1P). This reaction is the first ether-bond-formation step in the biosynthesis of archaeal membrane lipids. The polypeptide is Geranylgeranylglyceryl phosphate synthase (Hyperthermus butylicus (strain DSM 5456 / JCM 9403 / PLM1-5)).